The sequence spans 320 residues: Cytochrome f (320 aa).

Residues 1–35 form the signal peptide; sequence MQTINTFSWIKEQITRSISISLILYIITRSSIANA. Residues Y36, C56, C59, and H60 each contribute to the heme site. The chain crosses the membrane as a helical span at residues 286-305; the sequence is IQGLLFFFASVILAQIFLVL.

The protein belongs to the cytochrome f family. The 4 large subunits of the cytochrome b6-f complex are cytochrome b6, subunit IV (17 kDa polypeptide, petD), cytochrome f and the Rieske protein, while the 4 small subunits are PetG, PetL, PetM and PetN. The complex functions as a dimer. The cofactor is heme.

It is found in the plastid. Its subcellular location is the chloroplast thylakoid membrane. Component of the cytochrome b6-f complex, which mediates electron transfer between photosystem II (PSII) and photosystem I (PSI), cyclic electron flow around PSI, and state transitions. This Spinacia oleracea (Spinach) protein is Cytochrome f (petA).